The sequence spans 229 residues: NAD(P)H-hydrate epimerase (229 aa).

Residues 9 to 216 (AISVDEELFN…KLEEKYAMNL (208 aa)) form the YjeF N-terminal domain. 59 to 63 (NNGGD) is a binding site for (6S)-NADPHX. Residues N60 and D124 each contribute to the K(+) site. (6S)-NADPHX-binding positions include 128 to 134 (GFSFKPP) and D157. S160 lines the K(+) pocket.

The protein belongs to the NnrE/AIBP family. K(+) is required as a cofactor.

It catalyses the reaction (6R)-NADHX = (6S)-NADHX. The catalysed reaction is (6R)-NADPHX = (6S)-NADPHX. Functionally, catalyzes the epimerization of the S- and R-forms of NAD(P)HX, a damaged form of NAD(P)H that is a result of enzymatic or heat-dependent hydration. This is a prerequisite for the S-specific NAD(P)H-hydrate dehydratase to allow the repair of both epimers of NAD(P)HX. This Anopheles gambiae (African malaria mosquito) protein is NAD(P)H-hydrate epimerase.